We begin with the raw amino-acid sequence, 120 residues long: Glycine cleavage system H protein (120 aa).

Positions 17–99 (VATVGITEHA…QGAAWFFKLK (83 aa)) constitute a Lipoyl-binding domain. Lysine 58 carries the post-translational modification N6-lipoyllysine.

Belongs to the GcvH family. In terms of assembly, the glycine cleavage system is composed of four proteins: P, T, L and H. Requires (R)-lipoate as cofactor.

The glycine cleavage system catalyzes the degradation of glycine. The H protein shuttles the methylamine group of glycine from the P protein to the T protein. The polypeptide is Glycine cleavage system H protein (Sinorhizobium fredii (strain NBRC 101917 / NGR234)).